Consider the following 25-residue polypeptide: MREKWKKKRSRRLRRKRRKMRARSK.

The disordered stretch occupies residues 1–25 (MREKWKKKRSRRLRRKRRKMRARSK).

This sequence belongs to the eukaryotic ribosomal protein eS32 family. Component of the large ribosomal subunit.

The protein is Small ribosomal subunit protein eS32 (rpl41) of Agaricus bisporus (White button mushroom).